The sequence spans 966 residues: Alanine--tRNA ligase (966 aa).

Zn(2+) contacts are provided by His-646, His-650, Cys-750, and His-754. Positions 927 to 949 (DRLGGGGGGRPSLASAGGRDPEA) are disordered.

This sequence belongs to the class-II aminoacyl-tRNA synthetase family. Zn(2+) serves as cofactor.

It localises to the cytoplasm. It catalyses the reaction tRNA(Ala) + L-alanine + ATP = L-alanyl-tRNA(Ala) + AMP + diphosphate. Functionally, catalyzes the attachment of alanine to tRNA(Ala) in a two-step reaction: alanine is first activated by ATP to form Ala-AMP and then transferred to the acceptor end of tRNA(Ala). Also edits incorrectly charged Ser-tRNA(Ala) and Gly-tRNA(Ala) via its editing domain. This is Alanine--tRNA ligase from Salinibacter ruber (strain DSM 13855 / M31).